Consider the following 140-residue polypeptide: MADRLTQLQTCVDQMLTQYFSALTHINTNHGFKSLAGEELVKDDTVPVVTDEERERTLEELAKDLVVKSQQIDYLIDSLPGIGSSEEHQMQQIEKLQKELEHYDQVTEDVIKEKDELLEHCDELILKLAQRKAHIDVESM.

The stretch at 52-130 (EERERTLEEL…CDELILKLAQ (79 aa)) forms a coiled coil.

The protein belongs to the Mediator complex subunit 21 family. As to quaternary structure, component of the Mediator complex.

The protein localises to the nucleus. Component of the Mediator complex, a coactivator involved in the regulated transcription of nearly all RNA polymerase II-dependent genes. Mediator functions as a bridge to convey information from gene-specific regulatory proteins to the basal RNA polymerase II transcription machinery. Mediator is recruited to promoters by direct interactions with regulatory proteins and serves as a scaffold for the assembly of a functional preinitiation complex with RNA polymerase II and the general transcription factors. In Yarrowia lipolytica (strain CLIB 122 / E 150) (Yeast), this protein is Mediator of RNA polymerase II transcription subunit 21 (SRB7).